Here is an 810-residue protein sequence, read N- to C-terminus: Chloride channel protein (810 aa).

Residues 2-48 lie on the Cytoplasmic side of the membrane; that stretch reads SHEKNEASGNPEAQSWKAQEAMLGVKTEVSRWRAVKNCLYRHLVKVL. The next 2 helical transmembrane spans lie at 49–86 and 93–116; these read GEDWIFLLLLGALMALVSWAMDFIGSRGLRFYKYLFAM and LQYLVWVCYPLILILFSSLFCQIV. The short motif at 122–126 is the Selectivity filter part_1 element; sequence GSGIP. A chloride-binding site is contributed by Ser-123. The segment at residues 125–132 is an intramembrane region (helical); that stretch reads IPELKTII. Helical transmembrane passes span 141-160 and 166-184; these read LTLRTFVAKTVGLTVALSAG and EGPFVHIASICATLLNQLL. A Selectivity filter part_2 motif is present at residues 164–168; sequence GKEGP. Intramembrane regions (helical) lie at residues 201–213 and 217–225; these read ILTVGCALGISCC and PLAGVLFSI. The next 3 membrane-spanning stretches (helical) occupy residues 237–254, 283–311, and 320–339; these read YWRGFLGGAFSAFIFRVL, LPAFAIIGIASGFFGALFVYLNRQIIVFM, and ILKKQRLIYPAVVTFVLATL. The N-linked (GlcNAc...) asparagine glycan is linked to Asn-365. Helical transmembrane passes span 389–408 and 416–439; these read NIFIVMALYFVMHFWMAALA and GAFVPVFNLGAVLGRFVGELMALL. The Selectivity filter part_3 motif lies at 416 to 420; it reads GAFVP. Phe-418 is a chloride binding site. An intramembrane region (helical) is located at residues 456-470; that stretch reads GEYAVIGAAAMTGAV. Positions 471-472 form an intramembrane region, note=Loop between two helices; it reads TH. The helical intramembrane region spans 473 to 484; the sequence is AVSTAVICFELT. The note=Loop between two helices intramembrane region spans 485–489; the sequence is GQISH. The chain crosses the membrane as a helical span at residues 490 to 506; it reads VLPMMVAVILANMVAQG. The Cytoplasmic portion of the chain corresponds to 507 to 810; it reads LQPSLYDSII…RTATSNSSGK (304 aa). A chloride-binding site is contributed by Tyr-512. Residues 543–601 form the CBS 1 domain; that stretch reads MVRDVTSIASTSTYGDLLHVLRQTKLKFFPFVDTPETNTLLGSIERTEVEGLLQRRISA. 2 disordered regions span residues 604–631 and 658–688; these read RQPATAAEAEEEGRNGERGASFTGDVPG and KVQTEDPRPPSPVPAEEPTQTSGIYQKKHKG. Positions 724 to 781 constitute a CBS 2 domain; sequence IDQSPFQLVEGTSLQKTHTLFSLLGLDRAYVTSMGKLVGVVALAEIQAAIEGSYQKGF.

It belongs to the chloride channel (TC 2.A.49) family. ClC-0 subfamily. Homodimer. Each subunit has channel activity ('Double barreled channel').

It localises to the membrane. Voltage-gated chloride channel. This channel is thought to ensure the high conductance of the non-innervated membrane of the electrocyte necessary for efficient current generation caused by sodium influx through the acetylcholine receptor at the innervated membrane. The polypeptide is Chloride channel protein (Tetronarce californica (Pacific electric ray)).